The following is a 670-amino-acid chain: uncharacterized protein (670 aa).

10 helical membrane-spanning segments follow: residues 23–42, 47–69, 76–98, 118–140, 153–170, 381–403, 410–432, 437–454, 461–483, and 493–510; these read YALR…YYLN, YWAM…SKSL, LLGA…FFLL, VAYA…VNIT, VCEV…MMIL, QWDA…SAVA, SLLM…GLMV, LWQF…MQLL, FAAL…NPPV, and NLAK…FAIL.

This sequence belongs to the aromatic acid exporter ArAE (TC 2.A.85) family.

The protein localises to the cell membrane. This is an uncharacterized protein from Escherichia coli (strain K12).